A 379-amino-acid chain; its full sequence is Structure-specific endonuclease subunit EME2 (379 aa).

The tract at residues 1–55 is disordered; the sequence is MARVGPGRAGVSCQGRGRGRGGSGQRRPPTWEISDSDAEDSAGSEAAARARDPAG. The tract at residues 50–266 is nuclease-like domain; forms the post-nick DNA binding interface and is involved in DNA recognition and bending; it reads ARDPAGERRA…YPLKQYRESQ (217 aa). The segment at 288–379 is helix-hairpin-helix (2HhH); forms the pre-nick DNA binding interface and is involved in DNA recognition and bending; the sequence is GLQAAWRRQI…NPDLLLDLGS (92 aa).

Belongs to the EME1/MMS4 family. In terms of assembly, part of the heterodimeric MUS81-EME2 complex; the complex forms specifically during the DNA replication phase of the cell cycle.

It is found in the nucleus. In terms of biological role, non-catalytic subunit of the structure-specific, heterodimeric DNA endonuclease MUS81-EME2 which is involved in the maintenance of genome stability. In the complex, EME2 is required for DNA cleavage, participating in DNA recognition and bending. MUS81-EME2 cleaves 3'-flaps and nicked Holliday junctions, and exhibit limited endonuclease activity with 5' flaps and nicked double-stranded DNAs. MUS81-EME2 which is active during the replication of DNA is more specifically involved in replication fork processing. Replication forks frequently encounter obstacles to their passage, including DNA base lesions, DNA interstrand cross-links, difficult-to-replicate sequences, transcription bubbles, or tightly bound proteins. One mechanism for the restart of a stalled replication fork involves nucleolytic cleavage mediated by the MUS81-EME2 endonuclease. By acting upon the stalled fork, MUS81-EME2 generates a DNA double-strand break (DSB) that can be repaired by homologous recombination, leading to the restoration of an active fork. MUS81-EME2 could also function in telomere maintenance. This Homo sapiens (Human) protein is Structure-specific endonuclease subunit EME2.